Consider the following 494-residue polypeptide: Folate-biopterin transporter (494 aa).

12 helical membrane-spanning segments follow: residues 31–51 (APSW…VLGL), 64–84 (LGLS…PWIL), 104–124 (SYLW…AAWV), 133–153 (VLLF…SLVV), 170–190 (LTWG…GALL), 197–217 (TVFA…FLIS), 246–266 (ILLP…ESAF), 284–303 (VRLV…QRFL), 310–330 (VIMG…LILI), 346–366 (LGDS…VLVL), 375–395 (IEAT…VLSF), and 415–435 (LALL…FLGL). Residues 441 to 461 (PQVKDKTEKEDNPDDPGDRLV) form a disordered region.

Belongs to the major facilitator superfamily. Folate-biopterin transporter (TC 2.A.71) family.

It localises to the cell membrane. In terms of biological role, mediates folate monoglutamate transport involved in tetrahydrofolate biosynthesis. It also mediates transport of antifolates, such as methotrexate and aminopterin. The chain is Folate-biopterin transporter from Synechocystis sp. (strain ATCC 27184 / PCC 6803 / Kazusa).